Reading from the N-terminus, the 383-residue chain is Transposase InsI for insertion sequence element IS30A (383 aa).

The Integrase catalytic domain maps to 213–379; that stretch reads VNGTPIHERS…TPKEIIERGV (167 aa).

The protein belongs to the transposase IS30 family.

Functionally, required for the transposition of the insertion element. In Escherichia coli (strain K12), this protein is Transposase InsI for insertion sequence element IS30A (insI1).